The sequence spans 69 residues: Cytochrome c oxidase subunit 8A, mitochondrial (69 aa).

The transit peptide at M1–Q25 directs the protein to the mitochondrion. An SIFI-degron motif is present at residues S2–L19. Over I26–G36 the chain is Mitochondrial matrix. Residues T37–S60 form a helical membrane-spanning segment. Residues H61–E69 are Mitochondrial intermembrane-facing.

This sequence belongs to the cytochrome c oxidase VIII family. In terms of assembly, component of the cytochrome c oxidase (complex IV, CIV), a multisubunit enzyme composed of 14 subunits. The complex is composed of a catalytic core of 3 subunits MT-CO1, MT-CO2 and MT-CO3, encoded in the mitochondrial DNA, and 11 supernumerary subunits COX4I1 (or COX4I2), COX5A, COX5B, COX6A2 (or COX6A1), COX6B1 (or COX6B2), COX6C, COX7A1 (or COX7A2), COX7B, COX7C, COX8B and NDUFA4, which are encoded in the nuclear genome. The complex exists as a monomer or a dimer and forms supercomplexes (SCs) in the inner mitochondrial membrane with NADH-ubiquinone oxidoreductase (complex I, CI) and ubiquinol-cytochrome c oxidoreductase (cytochrome b-c1 complex, complex III, CIII), resulting in different assemblies (supercomplex SCI(1)III(2)IV(1) and megacomplex MCI(2)III(2)IV(2)). In response to mitochondrial stress, the precursor protein is ubiquitinated by the SIFI complex in the cytoplasm before mitochondrial import, leading to its degradation. Within the SIFI complex, UBR4 initiates ubiquitin chain that are further elongated or branched by KCMF1.

The protein localises to the mitochondrion inner membrane. The protein operates within energy metabolism; oxidative phosphorylation. Functionally, component of the cytochrome c oxidase, the last enzyme in the mitochondrial electron transport chain which drives oxidative phosphorylation. The respiratory chain contains 3 multisubunit complexes succinate dehydrogenase (complex II, CII), ubiquinol-cytochrome c oxidoreductase (cytochrome b-c1 complex, complex III, CIII) and cytochrome c oxidase (complex IV, CIV), that cooperate to transfer electrons derived from NADH and succinate to molecular oxygen, creating an electrochemical gradient over the inner membrane that drives transmembrane transport and the ATP synthase. Cytochrome c oxidase is the component of the respiratory chain that catalyzes the reduction of oxygen to water. Electrons originating from reduced cytochrome c in the intermembrane space (IMS) are transferred via the dinuclear copper A center (CU(A)) of subunit 2 and heme A of subunit 1 to the active site in subunit 1, a binuclear center (BNC) formed by heme A3 and copper B (CU(B)). The BNC reduces molecular oxygen to 2 water molecules using 4 electrons from cytochrome c in the IMS and 4 protons from the mitochondrial matrix. The protein is Cytochrome c oxidase subunit 8A, mitochondrial (COX8A) of Bos taurus (Bovine).